We begin with the raw amino-acid sequence, 509 residues long: Cardiolipin synthase 1 (509 aa).

A run of 3 helical transmembrane segments spans residues 4–24 (PIIQ…LLNT), 30–50 (YTFV…VIFI), and 59–79 (LAWF…YSIF). 2 PLD phosphodiesterase domains span residues 238–265 (VNYR…GDEY) and 422–449 (KDGF…DVRS). Active-site residues include H243, K245, D250, H427, K429, and D434.

This sequence belongs to the phospholipase D family. Cardiolipin synthase subfamily.

It is found in the cell membrane. It catalyses the reaction 2 a 1,2-diacyl-sn-glycero-3-phospho-(1'-sn-glycerol) = a cardiolipin + glycerol. Functionally, catalyzes the reversible phosphatidyl group transfer from one phosphatidylglycerol molecule to another to form cardiolipin (CL) (diphosphatidylglycerol) and glycerol. In Bacillus anthracis, this protein is Cardiolipin synthase 1 (cls1).